We begin with the raw amino-acid sequence, 112 residues long: Putative pterin-4-alpha-carbinolamine dehydratase (112 aa).

The protein belongs to the pterin-4-alpha-carbinolamine dehydratase family.

It carries out the reaction (4aS,6R)-4a-hydroxy-L-erythro-5,6,7,8-tetrahydrobiopterin = (6R)-L-erythro-6,7-dihydrobiopterin + H2O. This Syntrophotalea carbinolica (strain DSM 2380 / NBRC 103641 / GraBd1) (Pelobacter carbinolicus) protein is Putative pterin-4-alpha-carbinolamine dehydratase.